Consider the following 208-residue polypeptide: Large ribosomal subunit protein uL3 (208 aa).

Residues 117-149 are disordered; sequence GFQGAIKRHGQSRGPMAHGSRYHRRPGSMGPVA.

This sequence belongs to the universal ribosomal protein uL3 family. Part of the 50S ribosomal subunit. Forms a cluster with proteins L14 and L19.

In terms of biological role, one of the primary rRNA binding proteins, it binds directly near the 3'-end of the 23S rRNA, where it nucleates assembly of the 50S subunit. This Exiguobacterium sp. (strain ATCC BAA-1283 / AT1b) protein is Large ribosomal subunit protein uL3.